Consider the following 115-residue polypeptide: ComG operon protein 5 (115 aa).

The propeptide at 1 to 7 (MWRENKG) is leader sequence. At phenylalanine 8 the chain carries N-methylphenylalanine. The chain crosses the membrane as a helical span at residues 13-31 (TMSALSLWLFVLLTVVPLW).

Processing of ComGE in competent cells requires ComC.

The protein resides in the cell membrane. Its subcellular location is the cell surface. Required for transformation and DNA binding. The chain is ComG operon protein 5 (comGE) from Bacillus subtilis (strain 168).